Here is a 381-residue protein sequence, read N- to C-terminus: Queuine tRNA-ribosyltransferase (381 aa).

The Proton acceptor role is filled by D92. Substrate-binding positions include 92–96 (DSGGF), D146, Q190, and G217. The segment at 248–254 (GVGRPED) is RNA binding. The active-site Nucleophile is the D267. Residues 272–276 (TRNAR) are RNA binding; important for wobble base 34 recognition. The Zn(2+) site is built by C305, C307, C310, and H337.

It belongs to the queuine tRNA-ribosyltransferase family. As to quaternary structure, homodimer. Within each dimer, one monomer is responsible for RNA recognition and catalysis, while the other monomer binds to the replacement base PreQ1. Zn(2+) is required as a cofactor.

It catalyses the reaction 7-aminomethyl-7-carbaguanine + guanosine(34) in tRNA = 7-aminomethyl-7-carbaguanosine(34) in tRNA + guanine. It functions in the pathway tRNA modification; tRNA-queuosine biosynthesis. Functionally, catalyzes the base-exchange of a guanine (G) residue with the queuine precursor 7-aminomethyl-7-deazaguanine (PreQ1) at position 34 (anticodon wobble position) in tRNAs with GU(N) anticodons (tRNA-Asp, -Asn, -His and -Tyr). Catalysis occurs through a double-displacement mechanism. The nucleophile active site attacks the C1' of nucleotide 34 to detach the guanine base from the RNA, forming a covalent enzyme-RNA intermediate. The proton acceptor active site deprotonates the incoming PreQ1, allowing a nucleophilic attack on the C1' of the ribose to form the product. After dissociation, two additional enzymatic reactions on the tRNA convert PreQ1 to queuine (Q), resulting in the hypermodified nucleoside queuosine (7-(((4,5-cis-dihydroxy-2-cyclopenten-1-yl)amino)methyl)-7-deazaguanosine). The protein is Queuine tRNA-ribosyltransferase of Xanthomonas campestris pv. campestris (strain 8004).